The primary structure comprises 631 residues: MFYAHFVLSKRGPLAKIWLAAHWDKKLTKAHVFECNLESSVESIISPKVKMALRTSGHLLLGVVRIYHRKAKYLLADCNEAFIKIKMAFRPGVVDLPEENREAAYNAITLPEEFHDFDQPLPDLDDIDVAQQFSLNQSRVEEITMREEVGNISILQENDFGDFGMDDREIMREGSAFEDDDMLVSTTTSNLLLESEQSTSNLNEKINHLEYEDQYKDDNFGEGNDGGILDDKLISNNDGGIFDDPPALSEAGVMLPEQPAHDDMDEDDNVSMGGPDSPDSVDPVEPMPTMTDQTTLVPNEEEAFALEPIDITVKETKAKRKRKLIVDSVKELDSKTIRAQLSDYSDIVTTLDLAPPTKKLMMWKETGGVEKLFSLPAQPLWNNRLLKLFTRCLTPLVPEDLRKRRKGGEADNLDEFLKEFENPEVPREDQQQQHQQRDVIDEPIIEEPSRLQESVMEASRTNIDESAMPPPPPQGVKRKAGQIDPEPVMPPQQVEQMEIPPVELPPEEPPNICQLIPELELLPEKEKEKEKEKEDDEEEEDEDASGGDQDQEERRWNKRTQQMLHGLQRALAKTGAESISLLELCRNTNRKQAAAKFYSFLVLKKQQAIELTQEEPYSDIIATPGPRFHII.

Residue Ser-46 is modified to Phosphoserine. A Glycyl lysine isopeptide (Lys-Gly) (interchain with G-Cter in SUMO2) cross-link involves residue Lys-48. Residues Asp-126–Asp-282 form a required for interaction with SMARCA5 region. Phosphoserine is present on Ser-153. The interval Ile-154–Met-171 is interaction with NIPBL. Ser-175 carries the phosphoserine modification. Lys-216 is covalently cross-linked (Glycyl lysine isopeptide (Lys-Gly) (interchain with G-Cter in SUMO2)). Position 249 is a phosphoserine (Ser-249). The interval Gln-258–Glu-285 is disordered. Residues Ser-271–Glu-285 show a composition bias toward low complexity. Positions Met-287–Lys-403 are interaction with WAPL and PDS5B. The interval Met-362 to Lys-403 is interaction with STAG1. Thr-394 is modified (phosphothreonine). Residue Lys-418 forms a Glycyl lysine isopeptide (Lys-Gly) (interchain with G-Cter in SUMO2) linkage. Over residues Pro-423–Ile-440 the composition is skewed to basic and acidic residues. 2 disordered regions span residues Pro-423–Met-489 and Pro-517–Lys-558. A Phosphoserine modification is found at Ser-454. Basic and acidic residues predominate over residues Leu-522–Glu-532. Over residues Lys-533–Gln-551 the composition is skewed to acidic residues. A Phosphoserine modification is found at Ser-545. Thr-623 is subject to Phosphothreonine.

The protein belongs to the rad21 family. As to quaternary structure, component of the cohesin complex, which consists of an SMC1A/B and SMC3 heterodimer core and 2 non-Smc subunits RAD21 and STAG1/SA1, STAG2/SA2 or STAG3/SA3. Interacts (via C-terminus) with SMC1A and (via N-terminus) with SMC3; these interactions are direct. The cohesin complex interacts with NUMA1. The cohesin complex also interacts with CDCA5, PDS5A and PDS5B; this interaction might regulate the ability of the cohesin complex to mediate sister chromatid cohesion. The interaction with PDS5B is direct and is stimulated by STAG1/SA1. The cohesin complex interacts with the cohesin loading complex subunits NIPBL/Scc2 (via HEAT repeats) and MAU2/Scc4. NIPBL directly contacts all members of the complex, RAD21, SMC1A/B, SMC3 and STAG1. The cohesin complex interacts with DDX11/ChIR1. Directly interacts with WAPL; this interaction is stimulated by STAG1/SA1. Interacts with the ISWI chromatin remodeling complex component SMARCA5/SNF2h; the interaction is direct. Interacts with the NuRD complex component CHD4; the interaction is direct. Cleaved by separase/ESPL1 at the onset of anaphase; this cleavage is required for sister chromatid separation and cytokinesis. Cleaved by caspase-3/CASP3 or caspase-7/CASP7 at the beginning of apoptosis. In terms of processing, phosphorylated; becomes hyperphosphorylated in M phase of cell cycle. The large dissociation of cohesin from chromosome arms during prophase may be partly due to its phosphorylation by PLK1. As to expression, expressed in the gut (at protein level).

It localises to the nucleus. Its subcellular location is the nucleus matrix. The protein resides in the chromosome. The protein localises to the centromere. It is found in the cytoplasm. It localises to the cytoskeleton. Its subcellular location is the spindle pole. The protein resides in the cytosol. Functionally, as a member of the cohesin complex, involved in sister chromatid cohesion from the time of DNA replication in S phase to their segregation in mitosis, a function that is essential for proper chromosome segregation, post-replicative DNA repair, and the prevention of inappropriate recombination between repetitive regions. The cohesin complex may also play a role in spindle pole assembly during mitosis. In interphase, cohesins may function in the control of gene expression by binding to numerous sites within the genome. May control RUNX1 gene expression. Binds to and represses APOB gene promoter. May play a role in embryonic gut development, possibly through the regulation of enteric neuron development. May promote apoptosis. The chain is Double-strand-break repair protein rad21 homolog (RAD21) from Homo sapiens (Human).